A 257-amino-acid polypeptide reads, in one-letter code: Dof zinc finger protein DOF5.3 (257 aa).

The interval 23–50 is disordered; sequence LSYSSNPTPLDNDQKKPSPATAVTRPQP. Positions 24–33 are enriched in polar residues; sequence SYSSNPTPLD. The Dof-type zinc finger occupies 55 to 109; sequence LRCPRCDSTNTKFCYYNNYSLTQPRYFCKSCRRYWTKGGTLRNIPVGGGCRKNKR. 4 residues coordinate Zn(2+): Cys-57, Cys-60, Cys-82, and Cys-85. The interval 104–127 is disordered; it reads CRKNKRSTSSAARSLRTTPEPASH. The span at 110-121 shows a compositional bias: low complexity; it reads STSSAARSLRTT.

As to expression, the PEAR proteins (e.g. DOF2.4, DOF5.1, DOF3.2, DOF1.1, DOF5.6 and DOF5.3) form a short-range concentration gradient that peaks at protophloem sieve elements (PSE). Accumulates in the stele.

It is found in the nucleus. Transcription factor that binds specifically to a 5'-AA[AG]G-3' consensus core sequence. The PEAR proteins (e.g. DOF2.4, DOF5.1, DOF3.2, DOF1.1, DOF5.6 and DOF5.3) activate gene expression that promotes radial growth of protophloem sieve elements. The chain is Dof zinc finger protein DOF5.3 from Arabidopsis thaliana (Mouse-ear cress).